Consider the following 166-residue polypeptide: Myosin regulatory light chain 2, ventricular/cardiac muscle isoform (166 aa).

Ser-2 is subject to N,N,N-trimethylserine. Asn-14 is subject to Deamidated asparagine. Phosphoserine is present on Ser-19. 3 consecutive EF-hand domains span residues 24–59 (TQIQEFKEAFTIMDQNRDGFIDKNDLRDTFAALGRV), 94–129 (DPEETILNAFKVFDPEGKGVLKADYIKEMLTTQAER), and 130–165 (FSKEEIDQMFAAFPPDVTGNLDYKNLVHIITHGEEK). Residues Asp-37, Asn-39, Asp-41, and Asp-48 each coordinate Ca(2+). A Phosphothreonine modification is found at Thr-52.

As to quaternary structure, myosin is a hexamer of 2 heavy chains and 4 light chains. Interacts with MYOC. N-terminus is methylated by METTL11A/NTM1. Post-translationally, phosphorylated by MYLK3 and MYLK2; promotes cardiac muscle contraction and function. Dephosphorylated by PPP1CB complexed to PPP1R12B. The phosphorylated form in adult is expressed as gradients across the heart from endocardium (low phosphorylation) to epicardium (high phosphorylation); regulates cardiac torsion and workload distribution.

The protein resides in the cytoplasm. The protein localises to the myofibril. It localises to the sarcomere. It is found in the a band. Its function is as follows. Contractile protein that plays a role in heart development and function. Following phosphorylation, plays a role in cross-bridge cycling kinetics and cardiac muscle contraction by increasing myosin lever arm stiffness and promoting myosin head diffusion; as a consequence of the increase in maximum contraction force and calcium sensitivity of contraction force. These events altogether slow down myosin kinetics and prolong duty cycle resulting in accumulated myosins being cooperatively recruited to actin binding sites to sustain thin filament activation as a means to fine-tune myofilament calcium sensitivity to force. During cardiogenesis plays an early role in cardiac contractility by promoting cardiac myofibril assembly. The chain is Myosin regulatory light chain 2, ventricular/cardiac muscle isoform from Bos taurus (Bovine).